Consider the following 1157-residue polypeptide: MSLFGVGFLAFAKGKRVCAIGRSSLGKISDPLEVPNLLDLQLDSFDWLIGGPRWRAALDAYRKNPSGAPIAEKSGLDEVFDEISPIEDSAGNMQLNFSKPVLEAEELSVRECRVRGRTYSAPLYVEAEFMNHDTGEIKTQTVFMGDFPLMTDKGTFVINGTERVVVSQLVRSPGVYFERTPEKNSEKDLFSGRIIPARGAWLEFEVDRHDQLGVRVDRKRRQPVIFFLRAIGMTDDEIRDAFGEFESISVQHEKNIGLSRDDALREIYRRVRPGEQASAEAGRALLENFYFTSRRFDLARVGRYKVNRKLGVDVDPTRMVLTRSDIIATIRYLAALHLGFSEVAVLNSNKSVPISTDDIDHLGNRRIRPVGELVQNQLRAGLARMERVVRERMTTQDIEAIIPQTLINVMPIVAALKEFYGTSQLSQFMDQNNPLAGLTHKRRLSALGPGGLSRERAGVEVRDVNPSHYGRMCPIETPEGPNIGLIGSLACYSRVNSFGFIETPYRRVVNGKVTDDIEYMTATQEDEHAIAQASTPLRPDNSFVDERVLVRRKGGEVEVVPADQVDYMDVSGRQMVSVATSLIPFLEHNDANRALMGSNMQRQAVPLLVTESPLVGTGMERYVAIDAGDVLIAEDPGIVGDVSADVVTVKQDDGKHRDYHVGKFVRSNQGNCYNQRVVVRSGDRVEKGTVLADGPCTDKGELSLGRNLLVAFMPWEGYNFEDAIIISQNLVKDDTLSSIHIEEHEVSTRDTKLGSEEITRDLPNVSMDYIKDLDERGIIRIGAEVGPGDILVGKVTPKGETELSAEERLLRAIFNEKSMEVRDTSLKVPHGQQGTVIDVKLFDAVDGEDKLGAGINQRVVVYIAHKRKITEGDKLAGRHGNKGVISKILPVEDMPFMADGTPVDIILNPLGVPARMNFGQVLETHLGWISKQGWKIEGDPDWAKDIRVREAQPDSRVSSPVFDGISEGEITGLFSSVFPNRDGERAVGSDGKAILYDGRTGEPFPEPISVGYMYVLKLHHLVDDKIHARSTGPYSMIIQQPLGGKAQFGGQRFGEMEVWALEAYGAAHALQELLTIKSDDVVGRVKVYDAIVKGYPIPTPGVPESFKVIVKEMQSLCINIEVVSDGEDDVSADAETLQIEEGLDTSPKVEVGSLEEV.

The protein belongs to the RNA polymerase beta chain family. As to quaternary structure, the RNAP catalytic core consists of 2 alpha, 1 beta, 1 beta' and 1 omega subunit. When a sigma factor is associated with the core the holoenzyme is formed, which can initiate transcription.

The enzyme catalyses RNA(n) + a ribonucleoside 5'-triphosphate = RNA(n+1) + diphosphate. In terms of biological role, DNA-dependent RNA polymerase catalyzes the transcription of DNA into RNA using the four ribonucleoside triphosphates as substrates. This is DNA-directed RNA polymerase subunit beta from Tropheryma whipplei (Whipple's bacillus).